The following is a 360-amino-acid chain: MNKITFMGVELEEQGPSDLIVKALGKSIKLMDLETFIDTTGFEKDPIMNDYFWQIMVTKQRTHLSAMLLQCLGYEGEFRVQQQHFKRFLKSNNIHPLELTSSDPDIKNYPTIQDEMKLLKPNVISNRKWLIVEPREFKKVIMKLNTKHGDRIREYYLCLEELLRLYLEYCVYFKEREAKLQITTLEQKLEQMNITMIEMKEEMNLSMEEHADKLDTLVDQNEELKLDVSEANEKLETVTHKLGIAVEDRSPRLEQKPLRERFVLFKRNVKNARFQYYAIRGQSIYVNGRLTLYNERYPNLEIIIDIFCQPNPRNLFLRFKNYVKDDERFNFAGNNVECDITYESIMKEIFEKLNEEKRNV.

Residues 173-243 (FKEREAKLQI…KLETVTHKLG (71 aa)) are a coiled coil.

This chain is Putative MSV199 domain-containing protein 212L, found in Acheta domesticus (House cricket).